The chain runs to 330 residues: Aspartate--ammonia ligase (330 aa).

This sequence belongs to the class-II aminoacyl-tRNA synthetase family. AsnA subfamily.

It localises to the cytoplasm. It catalyses the reaction L-aspartate + NH4(+) + ATP = L-asparagine + AMP + diphosphate + H(+). The protein operates within amino-acid biosynthesis; L-asparagine biosynthesis; L-asparagine from L-aspartate (ammonia route): step 1/1. The chain is Aspartate--ammonia ligase from Streptococcus equi subsp. equi (strain 4047).